A 236-amino-acid chain; its full sequence is Pyridoxal phosphate homeostasis protein (236 aa).

Position 36 is an N6-(pyridoxal phosphate)lysine (lysine 36).

It belongs to the pyridoxal phosphate-binding protein YggS/PROSC family.

In terms of biological role, pyridoxal 5'-phosphate (PLP)-binding protein, which is involved in PLP homeostasis. The polypeptide is Pyridoxal phosphate homeostasis protein (Vibrio cholerae serotype O1 (strain ATCC 39315 / El Tor Inaba N16961)).